Reading from the N-terminus, the 328-residue chain is ATP synthase mitochondrial F1 complex assembly factor 1 (328 aa).

The transit peptide at 1–57 (MAAVVVAAAGGAGPAVLQVAGLYRGLCAVRSRALGLGLVSPAQLRVFPVRPGSGRPE) directs the protein to the mitochondrion.

It belongs to the ATP11 family. In terms of assembly, interacts with ATP5F1B; involved in the assembly of the F1 component of the mitochondrial ATP synthase (ATPase). Weakly expressed in muscle.

The protein resides in the mitochondrion inner membrane. Functionally, has a complex stabilizing activity in the assembly of the mitochondrial F1-F0 complex. The chain is ATP synthase mitochondrial F1 complex assembly factor 1 from Homo sapiens (Human).